The chain runs to 846 residues: Major vault protein beta (846 aa).

A2 is modified (N-acetylalanine). 9 MVP repeats span residues 2-60 (ATPV…IPPR), 61-115 (QYCI…QPVP), 116-172 (LQVI…EPVR), 173-225 (AVII…GFIQ), 226-280 (ALVL…RDIK), 281-332 (AITL…IQNV), 333-388 (NVLS…RRKR), 389-458 (IPLD…STKV), and 459-521 (ITYR…FLGP).

In terms of assembly, the vault ribonucleoprotein particle is a huge (400 A x 670 A) cage structure of 12.9 MDa. It consists of a dimer of half-vaults, with each half-vault comprising 39 identical major vault protein (MVP) chains. Dictyostelium is one of the few organisms in which the major component is actually two proteins (alpha and beta).

The protein localises to the cytoplasm. Its subcellular location is the nucleus. Functionally, unknown, though MVP-beta is required for normal vault structure. The chain is Major vault protein beta (mvpB) from Dictyostelium discoideum (Social amoeba).